A 332-amino-acid chain; its full sequence is Lipoyl synthase (332 aa).

C79, C84, C90, C105, C109, C112, and S319 together coordinate [4Fe-4S] cluster. In terms of domain architecture, Radical SAM core spans 91-308 (FSHGTATFMI…ADYGYEIGFK (218 aa)).

It belongs to the radical SAM superfamily. Lipoyl synthase family. Requires [4Fe-4S] cluster as cofactor.

The protein localises to the cytoplasm. It carries out the reaction [[Fe-S] cluster scaffold protein carrying a second [4Fe-4S](2+) cluster] + N(6)-octanoyl-L-lysyl-[protein] + 2 oxidized [2Fe-2S]-[ferredoxin] + 2 S-adenosyl-L-methionine + 4 H(+) = [[Fe-S] cluster scaffold protein] + N(6)-[(R)-dihydrolipoyl]-L-lysyl-[protein] + 4 Fe(3+) + 2 hydrogen sulfide + 2 5'-deoxyadenosine + 2 L-methionine + 2 reduced [2Fe-2S]-[ferredoxin]. It participates in protein modification; protein lipoylation via endogenous pathway; protein N(6)-(lipoyl)lysine from octanoyl-[acyl-carrier-protein]: step 2/2. Its function is as follows. Catalyzes the radical-mediated insertion of two sulfur atoms into the C-6 and C-8 positions of the octanoyl moiety bound to the lipoyl domains of lipoate-dependent enzymes, thereby converting the octanoylated domains into lipoylated derivatives. The protein is Lipoyl synthase of Hahella chejuensis (strain KCTC 2396).